The sequence spans 368 residues: Flagellar P-ring protein (368 aa).

The N-terminal stretch at M1–A24 is a signal peptide.

It belongs to the FlgI family. In terms of assembly, the basal body constitutes a major portion of the flagellar organelle and consists of four rings (L,P,S, and M) mounted on a central rod.

Its subcellular location is the periplasm. The protein localises to the bacterial flagellum basal body. Its function is as follows. Assembles around the rod to form the L-ring and probably protects the motor/basal body from shearing forces during rotation. This is Flagellar P-ring protein from Methylobacillus flagellatus (strain ATCC 51484 / DSM 6875 / VKM B-1610 / KT).